We begin with the raw amino-acid sequence, 110 residues long: Nucleoid-associated protein KPK_4227 (110 aa).

A disordered region spans residues 1–22 (MFGGKGGLGNLMKQAQQMQDKM).

It belongs to the YbaB/EbfC family. In terms of assembly, homodimer.

Its subcellular location is the cytoplasm. The protein localises to the nucleoid. Binds to DNA and alters its conformation. May be involved in regulation of gene expression, nucleoid organization and DNA protection. The protein is Nucleoid-associated protein KPK_4227 of Klebsiella pneumoniae (strain 342).